We begin with the raw amino-acid sequence, 480 residues long: MEKWWFNSMLSNEELEHKCGLSKSADSLGPIGNASGSETPIINGIDKNIHSWSDNGSYSCSNVDHLFGVRDIWSFISDDTFLVRDSNGDSYSVYFDIENQIFEIHNDSYFLSELESAFSSYLNKRSFSSYLNSGPKSYNRNYDRYMYDTQYSWNNHINSCIDSYLHSEISIDSDIYSYICSESLSGSDSESSSIRTSINGSDFDINTKYGRLWVQCENCYGLNYQKFFRSKMNICERCGYYLKMSSSDRIELSIDPGTWDPMDEDMISMDPIEFHSEEEPYRDRIDFFQRTTGLTEAVQTGIGQLNGIPIAIGVMDFQFMGGSMGSVVGEKITRLIECATNRSLPVIIVCASGGARMQEGSLSLMQMAKISSALYNYQSNKKLFYVSILTSPTTGGVTASFGMLGDIIIAEPNAYIAFAGKRVIEQTLKKTIPEGSQAAEYLFHKGLFDLIVPRNPLKGVPSELFQLHGFFPLNQINKYK.

The region spanning 212 to 480 is the CoA carboxyltransferase N-terminal domain; sequence LWVQCENCYG…FPLNQINKYK (269 aa). Cysteine 216, cysteine 219, cysteine 235, and cysteine 238 together coordinate Zn(2+). The C4-type zinc finger occupies 216 to 238; the sequence is CENCYGLNYQKFFRSKMNICERC.

Belongs to the AccD/PCCB family. As to quaternary structure, acetyl-CoA carboxylase is a heterohexamer composed of biotin carboxyl carrier protein, biotin carboxylase and 2 subunits each of ACCase subunit alpha and ACCase plastid-coded subunit beta (accD). Requires Zn(2+) as cofactor.

It is found in the plastid. The protein resides in the chloroplast stroma. It catalyses the reaction N(6)-carboxybiotinyl-L-lysyl-[protein] + acetyl-CoA = N(6)-biotinyl-L-lysyl-[protein] + malonyl-CoA. It functions in the pathway lipid metabolism; malonyl-CoA biosynthesis; malonyl-CoA from acetyl-CoA: step 1/1. Component of the acetyl coenzyme A carboxylase (ACC) complex. Biotin carboxylase (BC) catalyzes the carboxylation of biotin on its carrier protein (BCCP) and then the CO(2) group is transferred by the transcarboxylase to acetyl-CoA to form malonyl-CoA. This chain is Acetyl-coenzyme A carboxylase carboxyl transferase subunit beta, chloroplastic, found in Illicium oligandrum (Star anise).